The chain runs to 375 residues: Leucoanthocyanidin dioxygenase 1 (375 aa).

Positions 218–317 (LLLQLKINYY…RLSWVVFCEP (100 aa)) constitute a Fe2OG dioxygenase domain. Fe cation contacts are provided by His242, Asp244, and His298. Arg308 contributes to the 2-oxoglutarate binding site.

The protein belongs to the iron/ascorbate-dependent oxidoreductase family. L-ascorbate serves as cofactor. The cofactor is Fe(2+).

The enzyme catalyses a (2R,3S,4S)-leucoanthocyanidin + 2-oxoglutarate + O2 = a 4-H-anthocyanidin with a 3-hydroxy group + succinate + CO2 + 2 H2O. Its pathway is pigment biosynthesis; anthocyanin biosynthesis. Involved in anthocyanin and protoanthocyanidin biosynthesis by catalyzing the oxidation of leucoanthocyanidins into anthocyanidins. The polypeptide is Leucoanthocyanidin dioxygenase 1 (Oryza sativa subsp. japonica (Rice)).